A 568-amino-acid polypeptide reads, in one-letter code: Zinc finger protein 648 (568 aa).

Residues 1-11 (MAQVDSQDRWG) show a composition bias toward basic and acidic residues. The tract at residues 1–106 (MAQVDSQDRW…MSGKASWSRD (106 aa)) is disordered. 10 consecutive C2H2-type zinc fingers follow at residues 279–301 (YACE…RRLH), 307–329 (YQCS…IRTH), 335–358 (YPCP…RNMH), 364–386 (FPCS…QRTH), 392–414 (FRCP…QRVH), 420–442 (FPCP…QTLH), 448–470 (FKCA…QRIH), 476–498 (FPCT…QQIH), 504–526 (FLCA…IRMH), and 532–554 (YQCE…RAKH). Residues 548-568 (QRHRAKHGTCKKEPIPSSSDE) are disordered.

It belongs to the krueppel C2H2-type zinc-finger protein family.

Its subcellular location is the nucleus. May be involved in transcriptional regulation. This chain is Zinc finger protein 648 (ZNF648), found in Homo sapiens (Human).